The following is a 252-amino-acid chain: Serine/threonine phosphatase stp (252 aa).

Residues methionine 1 to aspartate 18 are compositionally biased toward basic and acidic residues. Residues methionine 1–phenylalanine 23 are disordered. The 241-residue stretch at histidine 2–arginine 242 folds into the PPM-type phosphatase domain. Mn(2+)-binding residues include aspartate 36, glycine 37, aspartate 194, and aspartate 233.

This sequence belongs to the PP2C family. The cofactor is Mn(2+).

It is found in the cytoplasm. The protein resides in the membrane. The catalysed reaction is O-phospho-L-seryl-[protein] + H2O = L-seryl-[protein] + phosphate. The enzyme catalyses O-phospho-L-threonyl-[protein] + H2O = L-threonyl-[protein] + phosphate. With respect to regulation, activity not affected by inhibitors of phosphatases of the PPP family such as okadaic acid and cypermethrin, or by inhibitors of phosphatases of the PTP family such as sodium orthovanadate. Its function is as follows. Protein phosphatase that dephosphorylates EF-Tu. This chain is Serine/threonine phosphatase stp (stp), found in Listeria monocytogenes serovar 1/2a (strain ATCC BAA-679 / EGD-e).